A 324-amino-acid polypeptide reads, in one-letter code: MKLVINGEERNFSASMTVEALLGELGVDSRKVAVERNLEIVPKSSYAQVAVNDGDKLEIVAFIGGGSDQADSFTVAGKTFNSRLLVGTGKYKDFEETALAIEASGAEIVTVAVRRVNLSDPSKPMLVDYVSPKKYTFLPNTAGCYTADDSVRTLRLAREAGGWNLVKLEVLGDQTTLYPNMPETLKAAEALIKDGFEVMVYCSDDPIQAKMLEDMGCVAIMPLGSLIGSGLGILNPTTIRIIKDTVKVPVLVDAGVGTASDAALAMELGCDGVLMNTAIAHAKDPIRMARAMKLAIEAGRLSYLAGRMPKKSYADPSSPTSGLI.

Residue K167 is the Schiff-base intermediate with DXP of the active site. 1-deoxy-D-xylulose 5-phosphate contacts are provided by residues G228, A254–G255, and N276–T277.

It belongs to the ThiG family. As to quaternary structure, homotetramer. Forms heterodimers with either ThiH or ThiS.

The protein resides in the cytoplasm. The enzyme catalyses [ThiS sulfur-carrier protein]-C-terminal-Gly-aminoethanethioate + 2-iminoacetate + 1-deoxy-D-xylulose 5-phosphate = [ThiS sulfur-carrier protein]-C-terminal Gly-Gly + 2-[(2R,5Z)-2-carboxy-4-methylthiazol-5(2H)-ylidene]ethyl phosphate + 2 H2O + H(+). The protein operates within cofactor biosynthesis; thiamine diphosphate biosynthesis. Its function is as follows. Catalyzes the rearrangement of 1-deoxy-D-xylulose 5-phosphate (DXP) to produce the thiazole phosphate moiety of thiamine. Sulfur is provided by the thiocarboxylate moiety of the carrier protein ThiS. In vitro, sulfur can be provided by H(2)S. This Paramagnetospirillum magneticum (strain ATCC 700264 / AMB-1) (Magnetospirillum magneticum) protein is Thiazole synthase.